The primary structure comprises 151 residues: HTH-type transcriptional regulator FL11 (151 aa).

The region spanning 5–66 is the HTH asnC-type domain; the sequence is LDDIDKKIIE…VVNPEALGYN (62 aa). The segment at residues 24–43 is a DNA-binding region (H-T-H motif); it reads LREISKITGLAESTIHERIK. 98 to 104 serves as a coordination point for L-arginine; it reads ETTGDYD. Residues Asn118, Asp122, and 133-135 contribute to the L-lysine site; that span reads THT. L-arginine-binding positions include Asp122 and 133–135; that span reads THT.

Homodimer. Binds DNA as a dimer and an octamer.

Its activity is regulated as follows. In the famine mode, FL11 forms dimers and acts as a repressor, leading to growth arrest. In the feast mode, in the presence of high concentrations of lysine or arginine, four dimers assemble into an octamer and cover the fl11 and lysine biosynthesis promoters. This leads to the inhibition of fl11 expression and lysine biosynthesis, decrease of the FL11 concentration in the cell, derepression of the target genes and activation of the metabolism. Functionally, DNA-binding protein involved in the repression of transcription of a large number of genes, thereby arresting growth, in response to environmental changes. The sequence is that of HTH-type transcriptional regulator FL11 from Pyrococcus furiosus (strain ATCC 43587 / DSM 3638 / JCM 8422 / Vc1).